We begin with the raw amino-acid sequence, 508 residues long: GMP synthase [glutamine-hydrolyzing] (508 aa).

In terms of domain architecture, Glutamine amidotransferase type-1 spans 1–189 (MILVLDFGSQ…ALLVCGCEKT (189 aa)). The Nucleophile role is filled by C78. Catalysis depends on residues H163 and E165. The 194-residue stretch at 190–383 (WGMQHFAQRE…LGVSQDFLMR (194 aa)) folds into the GMPS ATP-PPase domain. 217 to 223 (SGGVDST) is a binding site for ATP.

In terms of assembly, homodimer.

It carries out the reaction XMP + L-glutamine + ATP + H2O = GMP + L-glutamate + AMP + diphosphate + 2 H(+). The protein operates within purine metabolism; GMP biosynthesis; GMP from XMP (L-Gln route): step 1/1. In terms of biological role, catalyzes the synthesis of GMP from XMP. In Helicobacter pylori (strain ATCC 700392 / 26695) (Campylobacter pylori), this protein is GMP synthase [glutamine-hydrolyzing] (guaA).